The primary structure comprises 434 residues: Trigger factor (434 aa).

The region spanning 161-246 (KDIVTIDFKG…IHKVEEPQLP (86 aa)) is the PPIase FKBP-type domain.

Belongs to the FKBP-type PPIase family. Tig subfamily.

The protein resides in the cytoplasm. The enzyme catalyses [protein]-peptidylproline (omega=180) = [protein]-peptidylproline (omega=0). In terms of biological role, involved in protein export. Acts as a chaperone by maintaining the newly synthesized protein in an open conformation. Functions as a peptidyl-prolyl cis-trans isomerase. This chain is Trigger factor, found in Marinobacter nauticus (strain ATCC 700491 / DSM 11845 / VT8) (Marinobacter aquaeolei).